The following is a 335-amino-acid chain: Holliday junction branch migration complex subunit RuvB (335 aa).

The interval 1–181 (MDRIVEIEKY…FGMQFRLEFY (181 aa)) is large ATPase domain (RuvB-L). Leu-20 provides a ligand contact to ATP. Residues Arg-21, Tyr-28, Ile-29, Gly-62, Leu-63, Gly-64, Lys-65, Thr-66, and Thr-67 each coordinate ADP. ATP contacts are provided by residues 128–130 (EDY) and Arg-171. The ADP site is built by Tyr-181 and Arg-218. The small ATPAse domain (RuvB-S) stretch occupies residues 182–252 (KDSELALILQ…RANEALNSLG (71 aa)). The segment at 255–335 (ELGFDAMDLR…LNYEKTLFEE (81 aa)) is head domain (RuvB-H). Arg-309 and Arg-314 together coordinate DNA.

This sequence belongs to the RuvB family. Homohexamer. Forms an RuvA(8)-RuvB(12)-Holliday junction (HJ) complex. HJ DNA is sandwiched between 2 RuvA tetramers; dsDNA enters through RuvA and exits via RuvB. An RuvB hexamer assembles on each DNA strand where it exits the tetramer. Each RuvB hexamer is contacted by two RuvA subunits (via domain III) on 2 adjacent RuvB subunits; this complex drives branch migration. In the full resolvosome a probable DNA-RuvA(4)-RuvB(12)-RuvC(2) complex forms which resolves the HJ.

Its subcellular location is the cytoplasm. The catalysed reaction is ATP + H2O = ADP + phosphate + H(+). Functionally, the RuvA-RuvB-RuvC complex processes Holliday junction (HJ) DNA during genetic recombination and DNA repair, while the RuvA-RuvB complex plays an important role in the rescue of blocked DNA replication forks via replication fork reversal (RFR). RuvA specifically binds to HJ cruciform DNA, conferring on it an open structure. The RuvB hexamer acts as an ATP-dependent pump, pulling dsDNA into and through the RuvAB complex. RuvB forms 2 homohexamers on either side of HJ DNA bound by 1 or 2 RuvA tetramers; 4 subunits per hexamer contact DNA at a time. Coordinated motions by a converter formed by DNA-disengaged RuvB subunits stimulates ATP hydrolysis and nucleotide exchange. Immobilization of the converter enables RuvB to convert the ATP-contained energy into a lever motion, pulling 2 nucleotides of DNA out of the RuvA tetramer per ATP hydrolyzed, thus driving DNA branch migration. The RuvB motors rotate together with the DNA substrate, which together with the progressing nucleotide cycle form the mechanistic basis for DNA recombination by continuous HJ branch migration. Branch migration allows RuvC to scan DNA until it finds its consensus sequence, where it cleaves and resolves cruciform DNA. The protein is Holliday junction branch migration complex subunit RuvB of Campylobacter jejuni subsp. jejuni serotype O:2 (strain ATCC 700819 / NCTC 11168).